Here is a 367-residue protein sequence, read N- to C-terminus: Cycloaraneosene synthase sdnA (367 aa).

Positions 1–24 (MSLYGLFTLATSYLPSVGGGAALA) are cleaved as a signal peptide. Residues D115, N260, and S264 each coordinate Mg(2+). The DDXXD motif signature appears at 115-119 (DDQFD). The N-linked (GlcNAc...) asparagine glycan is linked to N276.

It belongs to the terpene synthase family. Requires Mg(2+) as cofactor.

It carries out the reaction (2E,6E,10E)-geranylgeranyl diphosphate = cycloaraneosene + diphosphate. It participates in antibiotic biosynthesis. Its function is as follows. Cycloaraneosene synthase; part of the gene cluster that mediates the biosynthesis of sordarin and hypoxysordarin, glycoside antibiotics with a unique tetracyclic diterpene aglycone structure. First, the geranylgeranyl diphosphate synthase sdnC constructs GGDP from farnesyl diphosphate and isopentenyl diphosphate. The diterpene cyclase sdnA then catalyzes the cyclization of GGDP to afford cycloaraneosene. Cycloaraneosene is then hydroxylated four times by the putative cytochrome P450 monooxygenases sdnB, sdnE, sdnF and sdnH to give a hydroxylated cycloaraneosene derivative such as cycloaraneosene-8,9,13,19-tetraol. Although the order of the hydroxylations is unclear, at least C8, C9 and C13 of the cycloaraneosene skeleton are hydroxylated before the sordaricin formation. Dehydration of the 13-hydroxy group of the hydroxylated cycloaraneosene derivative might be catalyzed by an unassigned hypothetical protein such as sdnG and sdnP to construct the cyclopentadiene moiety. The FAD-dependent oxidoreductase sdnN is proposed to catalyze the oxidation at C9 of the hydroxylated cycloaraneosene derivative and also catalyze the Baeyer-Villiger oxidation to give the lactone intermediate. The presumed lactone intermediate would be hydrolyzed to give an acrolein moiety and a carboxylate moiety. Then, [4+2]cycloaddition would occur between the acrolein moiety and the cyclopentadiene moiety to give sordaricin. SdnN might also be involved in the [4+2]cycloaddition after the hypothesized oxidation to accommodate the oxidized product and prompt the [4+2]cycloaddition. GDP-6-deoxy-D-altrose may be biosynthesized from GDP-D-mannose by the putative GDP-mannose-4,6-dehydratase sdnI and the short-chain dehydrogenase sdnK. The glycosyltransferase sdnJ catalyzes the attachment of 6-deoxy-D-altrose onto the 19-hydroxy group of sordaricin to give 4'-O-demethylsordarin. The methyltransferase sdnD would complete the biosynthesis of sordarin. Sordarin can be further modified into hypoxysordarin. The unique acyl chain at the 3'-hydroxy group of hypoxysordarin would be constructed by an iterative type I PKS sdnO and the trans-acting polyketide methyltransferase sdnL. SdnL would be responsible for the introduction of an alpha-methyl group of the polyketide chain. Alternatively, the beta-lactamase-like protein sdnR might be responsible for the cleavage and transfer of the polyketide chain from the PKS sdnO to sordarin. Two putative cytochrome P450 monooxygenases, sdnQ and sdnT, might catalyze the epoxidations of the polyketide chain to complete the biosynthesis of hypoxysordarin. Transcriptional regulators sdnM and sdnS are presumably encoded for the transcriptional regulation of the expression of the sdn gene cluster. The protein is Cycloaraneosene synthase sdnA of Sordaria araneosa (Pleurage araneosa).